Consider the following 742-residue polypeptide: Protein-lysine N-methyltransferase SMYD4 (742 aa).

Arg110–Ala112 lines the S-adenosyl-L-methionine pocket. Residues Ser230–Gly569 enclose the SET domain. Zn(2+) contacts are provided by Cys295, Cys298, Cys308, Cys311, Cys317, Cys321, His330, and Cys334. The MYND-type zinc finger occupies Cys295 to Cys334. Residues Asn418, Asn534 to His535, and Tyr568 each bind S-adenosyl-L-methionine.

Belongs to the class V-like SAM-binding methyltransferase superfamily.

It is found in the nucleus. The protein localises to the cytoplasm. The enzyme catalyses L-lysyl-[protein] + S-adenosyl-L-methionine = N(6)-methyl-L-lysyl-[protein] + S-adenosyl-L-homocysteine + H(+). In terms of biological role, protein-lysine N-methyltransferase. Monomethylates PRMT5, modulating its transcriptional activity. May also act as a histone methyltransferase. Plays a critical role in cardiac development. Acts as a key epigenetic regulator of gene expression during cardiac development via its dual activities as a methyltransferase and negative regulator of HDAC1. This Gallus gallus (Chicken) protein is Protein-lysine N-methyltransferase SMYD4 (SMYD4).